The chain runs to 210 residues: Small ribosomal subunit protein uS5 (210 aa).

Positions 1–11 (MTQPNTQTTPN) are enriched in polar residues. The segment at 1–56 (MTQPNTQTTPNDVPAAAEGQHQEQQQQQRRGGGRERRGGGRRGDRRGQERDSEWQE) is disordered. Positions 18–29 (EGQHQEQQQQQR) are enriched in low complexity. Residues 32–56 (GGRERRGGGRRGDRRGQERDSEWQE) are compositionally biased toward basic and acidic residues. The S5 DRBM domain maps to 54–117 (WQERVVQIRR…ADGKKHLVKV (64 aa)).

The protein belongs to the universal ribosomal protein uS5 family. In terms of assembly, part of the 30S ribosomal subunit. Contacts proteins S4 and S8.

With S4 and S12 plays an important role in translational accuracy. Functionally, located at the back of the 30S subunit body where it stabilizes the conformation of the head with respect to the body. The polypeptide is Small ribosomal subunit protein uS5 (Prochlorococcus marinus (strain MIT 9303)).